We begin with the raw amino-acid sequence, 192 residues long: uncharacterized protein (192 aa).

This is an uncharacterized protein from Haemophilus influenzae (strain ATCC 51907 / DSM 11121 / KW20 / Rd).